Here is a 276-residue protein sequence, read N- to C-terminus: Dermonecrotic toxin LspiSicTox-betaIE4ii (276 aa).

Residue histidine 5 is part of the active site. Mg(2+) contacts are provided by glutamate 25 and aspartate 27. Residue histidine 41 is the Nucleophile of the active site. 2 disulfide bridges follow: cysteine 45–cysteine 51 and cysteine 47–cysteine 189. Aspartate 85 contributes to the Mg(2+) binding site.

Belongs to the arthropod phospholipase D family. Class II subfamily. Mg(2+) serves as cofactor. As to expression, expressed by the venom gland.

The protein localises to the secreted. It carries out the reaction an N-(acyl)-sphingosylphosphocholine = an N-(acyl)-sphingosyl-1,3-cyclic phosphate + choline. It catalyses the reaction an N-(acyl)-sphingosylphosphoethanolamine = an N-(acyl)-sphingosyl-1,3-cyclic phosphate + ethanolamine. The catalysed reaction is a 1-acyl-sn-glycero-3-phosphocholine = a 1-acyl-sn-glycero-2,3-cyclic phosphate + choline. The enzyme catalyses a 1-acyl-sn-glycero-3-phosphoethanolamine = a 1-acyl-sn-glycero-2,3-cyclic phosphate + ethanolamine. Its function is as follows. Dermonecrotic toxins cleave the phosphodiester linkage between the phosphate and headgroup of certain phospholipids (sphingolipid and lysolipid substrates), forming an alcohol (often choline) and a cyclic phosphate. This toxin acts on sphingomyelin (SM). It may also act on ceramide phosphoethanolamine (CPE), lysophosphatidylcholine (LPC) and lysophosphatidylethanolamine (LPE), but not on lysophosphatidylserine (LPS), and lysophosphatidylglycerol (LPG). It acts by transphosphatidylation, releasing exclusively cyclic phosphate products as second products. Induces dermonecrosis, hemolysis, increased vascular permeability, edema, inflammatory response, and platelet aggregation. The sequence is that of Dermonecrotic toxin LspiSicTox-betaIE4ii from Loxosceles spinulosa (Recluse spider).